The chain runs to 195 residues: dITP/XTP pyrophosphatase (195 aa).

8 to 13 serves as a coordination point for substrate; the sequence is TNNQGK. E39 and D68 together coordinate Mg(2+). The active-site Proton acceptor is D68. Residues S69, 149–152, K172, and 177–178 each bind substrate; these read FGYD and HR.

This sequence belongs to the HAM1 NTPase family. Homodimer. The cofactor is Mg(2+).

It catalyses the reaction XTP + H2O = XMP + diphosphate + H(+). The catalysed reaction is dITP + H2O = dIMP + diphosphate + H(+). The enzyme catalyses ITP + H2O = IMP + diphosphate + H(+). Functionally, pyrophosphatase that catalyzes the hydrolysis of nucleoside triphosphates to their monophosphate derivatives, with a high preference for the non-canonical purine nucleotides XTP (xanthosine triphosphate), dITP (deoxyinosine triphosphate) and ITP. Seems to function as a house-cleaning enzyme that removes non-canonical purine nucleotides from the nucleotide pool, thus preventing their incorporation into DNA/RNA and avoiding chromosomal lesions. This Staphylococcus epidermidis (strain ATCC 12228 / FDA PCI 1200) protein is dITP/XTP pyrophosphatase.